The sequence spans 392 residues: Probable protein phosphatase 2C 29 (392 aa).

Positions 44–353 constitute a PPM-type phosphatase domain; that stretch reads DYSVAVAQAN…DDITVVVLFL (310 aa). Residues Asp-75, Gly-76, Asp-285, and Asp-344 each coordinate Mn(2+). Residues 360–392 form a disordered region; it reads AGRGDEIDGTDGPVDVFSLSPDDREDPTRPVLR.

Belongs to the PP2C family. Requires Mg(2+) as cofactor. The cofactor is Mn(2+).

It carries out the reaction O-phospho-L-seryl-[protein] + H2O = L-seryl-[protein] + phosphate. The catalysed reaction is O-phospho-L-threonyl-[protein] + H2O = L-threonyl-[protein] + phosphate. This Oryza sativa subsp. japonica (Rice) protein is Probable protein phosphatase 2C 29.